A 401-amino-acid polypeptide reads, in one-letter code: MRCDRVWSKARLATFAAGRPGIGVVEDGVVASLSGRIVYAGPATEAPAFEALETLDCEGRWITPGLIDPHTHLVFGGDRAREFELRLAGATYEEIARAGGGIVSTMKATRAASEGELVASALPRLDALIAEGLTTIEIKSGYGLSLDDELKSLRAARALADVRKVSVTTTFLGAHALPPEYEGDPDGYIDHVCYQMIPAVAAEGLADAVDAFCEGIGFSRAQTRRVFQAARERGLPVKLHAEQLSNLDGAALAAEFGALSADHLEHLDGAGIAAMAQAGTTAVLLPGAFYFVRETRLPPIQALRAAGVPLALATDCNPGTSPLTSLLLTLNMAATLFRMTVDECLAGVTREAARAIGRLDHIGTLEAGKSCDLAIWDIERPAQLVYRMGFNPLHARVWKGL.

Fe(3+)-binding residues include H70 and H72. Residues H70 and H72 each contribute to the Zn(2+) site. Residues R79, Y142, and H175 each coordinate 4-imidazolone-5-propanoate. Y142 is an N-formimidoyl-L-glutamate binding site. Position 240 (H240) interacts with Fe(3+). Zn(2+) is bound at residue H240. Position 243 (Q243) interacts with 4-imidazolone-5-propanoate. D315 lines the Fe(3+) pocket. D315 lines the Zn(2+) pocket. N-formimidoyl-L-glutamate is bound by residues N317 and G319. T320 serves as a coordination point for 4-imidazolone-5-propanoate.

This sequence belongs to the metallo-dependent hydrolases superfamily. HutI family. Zn(2+) is required as a cofactor. It depends on Fe(3+) as a cofactor.

The protein localises to the cytoplasm. It carries out the reaction 4-imidazolone-5-propanoate + H2O = N-formimidoyl-L-glutamate. It participates in amino-acid degradation; L-histidine degradation into L-glutamate; N-formimidoyl-L-glutamate from L-histidine: step 3/3. Its function is as follows. Catalyzes the hydrolytic cleavage of the carbon-nitrogen bond in imidazolone-5-propanoate to yield N-formimidoyl-L-glutamate. It is the third step in the universal histidine degradation pathway. This is Imidazolonepropionase from Caulobacter sp. (strain K31).